Reading from the N-terminus, the 437-residue chain is 3-deoxy-D-manno-octulosonic acid transferase (437 aa).

A helical; Signal-anchor transmembrane segment spans residues 16 to 36 (VVLVCAFVIALPKLLYKMLVY). The active-site Proton acceptor is the E70. CMP is bound by residues 279–280 (PR), 319–321 (IGL), and 346–349 (NLLE).

Belongs to the glycosyltransferase group 1 family. Glycosyltransferase 30 subfamily.

The protein resides in the cell inner membrane. The catalysed reaction is lipid IVA (E. coli) + CMP-3-deoxy-beta-D-manno-octulosonate = alpha-Kdo-(2-&gt;6)-lipid IVA (E. coli) + CMP + H(+). It carries out the reaction alpha-Kdo-(2-&gt;6)-lipid IVA (E. coli) + CMP-3-deoxy-beta-D-manno-octulosonate = alpha-Kdo-(2-&gt;4)-alpha-Kdo-(2-&gt;6)-lipid IVA (E. coli) + CMP + H(+). It catalyses the reaction alpha-Kdo-(2-&gt;4)-alpha-Kdo-(2-&gt;6)-lipid IVA (E. coli) + CMP-3-deoxy-beta-D-manno-octulosonate = alpha-Kdo-(2-&gt;8)-alpha-Kdo-(2-&gt;4)-alpha-Kdo-(2-&gt;6)-lipid IVA (E. coli) + CMP + H(+). The protein operates within bacterial outer membrane biogenesis; LPS core biosynthesis. Functionally, involved in lipopolysaccharide (LPS) biosynthesis. Catalyzes the transfer of three 3-deoxy-D-manno-octulosonate (Kdo) residues from CMP-Kdo to lipid IV(A), the tetraacyldisaccharide-1,4'-bisphosphate precursor of lipid A. Thus generates the genus-specific LPS epitope of Chlamydia, composed of the trisaccharide alpha-Kdo-(2-&gt;8)-alpha-Kdo-(2-&gt;4)-alpha-Kdo. The chain is 3-deoxy-D-manno-octulosonic acid transferase (waaA) from Chlamydia pneumoniae (Chlamydophila pneumoniae).